Consider the following 263-residue polypeptide: Small ribosomal subunit protein uS2 (263 aa).

Serine 2 bears the N-acetylserine mark. The span at 213–223 (NAAEEARAGAT) shows a compositional bias: low complexity. The disordered stretch occupies residues 213–245 (NAAEEARAGATEETEEVVAEAETEWNTETNVED). Positions 224-245 (EETEEVVAEAETEWNTETNVED) are enriched in acidic residues.

Belongs to the universal ribosomal protein uS2 family. As to quaternary structure, component of the small ribosomal subunit. Mature ribosomes consist of a small (40S) and a large (60S) subunit. The 40S subunit contains about 33 different proteins and 1 molecule of RNA (18S). The 60S subunit contains about 49 different proteins and 3 molecules of RNA (25S, 5.8S and 5S). Interacts with RPS21.

It localises to the cytoplasm. Its function is as follows. Required for the assembly and/or stability of the 40S ribosomal subunit. Required for the processing of the 20S rRNA-precursor to mature 18S rRNA in a late step of the maturation of 40S ribosomal subunits. The sequence is that of Small ribosomal subunit protein uS2 from Clavispora lusitaniae (strain ATCC 42720) (Yeast).